The chain runs to 88 residues: MLICKVLKPLVSTNRIPGFEHKHLQVVLDGSSNKVAVDAVGCKPGDWVICVGSSAAREAAGSKSYPSDLTIVGIIDHWDPDSPKQIEV.

The BMV domain maps to 1-76; it reads MLICKVLKPL…SDLTIVGIID (76 aa).

Belongs to the CcmL/EutN family. CsoS4 subfamily. Homopentamer.

Its subcellular location is the carboxysome. Functionally, probably forms vertices in the carboxysome, a polyhedral inclusion where RuBisCO (ribulose bisphosphate carboxylase, cbbL-cbbS) is sequestered. Has been modeled to induce curvature upon insertion into an otherwise flat hexagonal layer of major carboxysome subunits. Has not been identified in purified carboxysomes; it is expected to be present in very low amounts. The polypeptide is Carboxysome shell vertex protein CsoS4A (Prochlorococcus marinus subsp. pastoris (strain CCMP1986 / NIES-2087 / MED4)).